An 87-amino-acid chain; its full sequence is Insulin-related peptide 1 (87 aa).

The first 19 residues, 1 to 19 (MKSFMVFVLIFACFSCYYA), serve as a signal peptide directing secretion. Residues 20-44 (QESTNFYCGRTLSRALAVLCYGAES) constitute a propeptide that is removed on maturation. At arginine 64 the chain carries Arginine amide. Positions 68 to 87 (GPVDECCEKACSIQELMTYC) are excised as a propeptide.

It belongs to the insulin family. As to expression, DAGWWIPQHGHHALAGVR-amide: Expressed in corpora cardiaca (CC), corpora allata (CA), antennal lobe (AL) and gnathal ganglion (GNG) (at protein level). Expression in CC and CA detected in most animals, in AL and GNG in few animals (at protein level).

Its subcellular location is the secreted. This Agrotis ipsilon (Black cutworm moth) protein is Insulin-related peptide 1.